Consider the following 490-residue polypeptide: Arginine decarboxylase (490 aa).

K226 bears the N6-(pyridoxal phosphate)lysine mark.

It belongs to the Orn/Lys/Arg decarboxylase class-I family. Pyridoxal 5'-phosphate serves as cofactor.

It localises to the cytoplasm. The catalysed reaction is L-arginine + H(+) = agmatine + CO2. Its pathway is amine and polyamine biosynthesis; agmatine biosynthesis; agmatine from L-arginine: step 1/1. Catalyzes the formation of agmatine from arginine. The chain is Arginine decarboxylase (speA) from Bacillus subtilis (strain 168).